Here is a 156-residue protein sequence, read N- to C-terminus: Aspartate 1-decarboxylase (156 aa).

S26 serves as the catalytic Schiff-base intermediate with substrate; via pyruvic acid. S26 bears the Pyruvic acid (Ser) mark. T58 lines the substrate pocket. Y59 serves as the catalytic Proton donor. 74-76 contributes to the substrate binding site; the sequence is GGA.

This sequence belongs to the PanD family. As to quaternary structure, heterooctamer of four alpha and four beta subunits. Pyruvate is required as a cofactor. In terms of processing, is synthesized initially as an inactive proenzyme, which is activated by self-cleavage at a specific serine bond to produce a beta-subunit with a hydroxyl group at its C-terminus and an alpha-subunit with a pyruvoyl group at its N-terminus.

It is found in the cytoplasm. It carries out the reaction L-aspartate + H(+) = beta-alanine + CO2. The protein operates within cofactor biosynthesis; (R)-pantothenate biosynthesis; beta-alanine from L-aspartate: step 1/1. Catalyzes the pyruvoyl-dependent decarboxylation of aspartate to produce beta-alanine. This chain is Aspartate 1-decarboxylase, found in Gloeothece citriformis (strain PCC 7424) (Cyanothece sp. (strain PCC 7424)).